The following is a 292-amino-acid chain: Phosphatidylserine decarboxylase proenzyme (292 aa).

Active-site charge relay system; for autoendoproteolytic cleavage activity residues include D89, H146, and S252. S252 functions as the Schiff-base intermediate with substrate; via pyruvic acid; for decarboxylase activity in the catalytic mechanism. Residue S252 is modified to Pyruvic acid (Ser); by autocatalysis.

It belongs to the phosphatidylserine decarboxylase family. PSD-B subfamily. Prokaryotic type I sub-subfamily. As to quaternary structure, heterodimer of a large membrane-associated beta subunit and a small pyruvoyl-containing alpha subunit. Pyruvate is required as a cofactor. In terms of processing, is synthesized initially as an inactive proenzyme. Formation of the active enzyme involves a self-maturation process in which the active site pyruvoyl group is generated from an internal serine residue via an autocatalytic post-translational modification. Two non-identical subunits are generated from the proenzyme in this reaction, and the pyruvate is formed at the N-terminus of the alpha chain, which is derived from the carboxyl end of the proenzyme. The autoendoproteolytic cleavage occurs by a canonical serine protease mechanism, in which the side chain hydroxyl group of the serine supplies its oxygen atom to form the C-terminus of the beta chain, while the remainder of the serine residue undergoes an oxidative deamination to produce ammonia and the pyruvoyl prosthetic group on the alpha chain. During this reaction, the Ser that is part of the protease active site of the proenzyme becomes the pyruvoyl prosthetic group, which constitutes an essential element of the active site of the mature decarboxylase.

Its subcellular location is the cell membrane. The enzyme catalyses a 1,2-diacyl-sn-glycero-3-phospho-L-serine + H(+) = a 1,2-diacyl-sn-glycero-3-phosphoethanolamine + CO2. It functions in the pathway phospholipid metabolism; phosphatidylethanolamine biosynthesis; phosphatidylethanolamine from CDP-diacylglycerol: step 2/2. Functionally, catalyzes the formation of phosphatidylethanolamine (PtdEtn) from phosphatidylserine (PtdSer). The protein is Phosphatidylserine decarboxylase proenzyme of Shewanella sp. (strain MR-4).